The chain runs to 400 residues: MIPKQPKSNILIFLLENSDHLGLLKSLITFLPGRYGDSELFSEGLYSVANILQSYLDYRSSGILLSNNIDKISNGEKVPPPYYLTTLRWITTVQSLELFFEMLATKKGEQHDDSNSNNNNSNNNIKKMIIFIIELLKAILRLKLLIKTNGDMLVHHSFYVPSKDVKTILENNRNQQKQFQNKRPAVTMSINNNNNINNNDNNNINNNNNTNDDNFNNNNNNNNNRRTLSDQIFEQQRIVNQENNLLYQQQRELQQNESTLIKLLPPPPPKDYNTKTIGEILFIFRPVIYWVSYCIFGKKSWKPWFLSLVTELLSKSFSEYGNFKQKIRLTLLEAKELNRRKKLLFFYLIRSPFYEKFIGDGLLNKFLNFLKKIHIFKTLIDILINYLNVYRTRYFYTSAS.

Residues 176–226 form a disordered region; sequence QKQFQNKRPAVTMSINNNNNINNNDNNNINNNNNTNDDNFNNNNNNNNNRR. Positions 190–224 are enriched in low complexity; the sequence is INNNNNINNNDNNNINNNNNTNDDNFNNNNNNNNN.

This sequence belongs to the peroxin-16 family.

It localises to the cytoplasm. Functionally, required for peroxisome membrane biogenesis. The sequence is that of Peroxisome biogenesis factor 16 (pex16) from Dictyostelium discoideum (Social amoeba).